The sequence spans 109 residues: Large ribosomal subunit protein uL23 (109 aa).

This sequence belongs to the universal ribosomal protein uL23 family. Part of the 50S ribosomal subunit. Contacts protein L29, and trigger factor when it is bound to the ribosome.

One of the early assembly proteins it binds 23S rRNA. One of the proteins that surrounds the polypeptide exit tunnel on the outside of the ribosome. Forms the main docking site for trigger factor binding to the ribosome. The protein is Large ribosomal subunit protein uL23 of Haemophilus influenzae (strain PittEE).